The primary structure comprises 387 residues: Ferrochelatase (387 aa).

2 residues coordinate Fe cation: histidine 196 and glutamate 277.

This sequence belongs to the ferrochelatase family.

It is found in the cytoplasm. The enzyme catalyses heme b + 2 H(+) = protoporphyrin IX + Fe(2+). It functions in the pathway porphyrin-containing compound metabolism; protoheme biosynthesis; protoheme from protoporphyrin-IX: step 1/1. Catalyzes the ferrous insertion into protoporphyrin IX. This Cyanothece sp. (strain PCC 7425 / ATCC 29141) protein is Ferrochelatase.